Reading from the N-terminus, the 747-residue chain is DNA repair and recombination protein RAD54-like (747 aa).

The interval 1-42 (MRRSLAPSQLARRKPEDRSSDDEDWQPGTVTPKKRKSSSETQ) is disordered. A required for chromatin remodeling, strand pairing activities and coupling of ATPase activity region spans residues 2–9 (RRSLAPSQ). Ser-38 carries the post-translational modification Phosphoserine. Residues 170–345 (SRRIPGSHGC…FSLVHFVNSG (176 aa)) enclose the Helicase ATP-binding domain. Residue 183–190 (DEMGLGKT) coordinates ATP. Positions 296-299 (DEGH) match the DEGH box motif. One can recognise a Helicase C-terminal domain in the interval 500–653 (VLDYILAVTR…CVVDEEQDVE (154 aa)). Lys-515 is subject to N6-acetyllysine. Phosphoserine; by NEK1 is present on Ser-572.

It belongs to the SNF2/RAD54 helicase family. As to quaternary structure, homohexamer. Interacts (via N-terminus) with RAD51. Interacts with NAP1L1. Interacts with BRD9; this interaction orchestrates RAD51-RAD54 complex formation. In terms of processing, acetylated. Acetylation promotes interaction with BRD9, and subsequently with RAD54, which is essential for homologous recombination (HR). Post-translationally, phosphorylated. Phosphorylation at Ser-572 by NEK1 specifically in G2 phase allows efficient removal of RAD51 filaments from DNA. Hardly detectable in most tissues. Dramatically increased in thymus, spleen and testis.

It localises to the nucleus. The enzyme catalyses ATP + H2O = ADP + phosphate + H(+). In terms of biological role, plays an essential role in homologous recombination (HR) which is a major pathway for repairing DNA double-strand breaks (DSBs), single-stranded DNA (ssDNA) gaps, and stalled or collapsed replication forks. Acts as a molecular motor during the homology search and guides RAD51 ssDNA along a donor dsDNA thereby changing the homology search from the diffusion-based mechanism to a motor-guided mechanism. Plays also an essential role in RAD51-mediated synaptic complex formation which consists of three strands encased in a protein filament formed once homology is recognized. Once DNA strand exchange occured, dissociates RAD51 from nucleoprotein filaments formed on dsDNA. Deficiency also resulted in an increased frequency of end-to-end chromosome fusions involving telomeres compared to the controls, suggesting a putative role in telomere capping. Non-homologous end joining (NHEJ) and homologous recombination (HR) represent the two major pathways of DNA double-strand break (DSB) repair in eukaryotic cells. LIG4 and RAD54L cooperate to support cellular proliferation, repair spontaneous DSBs, and prevent chromosome and single chromatid aberrations. The protein is DNA repair and recombination protein RAD54-like (Rad54l) of Mus musculus (Mouse).